We begin with the raw amino-acid sequence, 235 residues long: Pyridoxine 5'-phosphate synthase (235 aa).

Asparagine 6 lines the 3-amino-2-oxopropyl phosphate pocket. Residue 8-9 (DH) coordinates 1-deoxy-D-xylulose 5-phosphate. Arginine 17 lines the 3-amino-2-oxopropyl phosphate pocket. Histidine 42 acts as the Proton acceptor in catalysis. 1-deoxy-D-xylulose 5-phosphate contacts are provided by arginine 44 and histidine 49. The active-site Proton acceptor is the glutamate 69. Threonine 99 contacts 1-deoxy-D-xylulose 5-phosphate. The active-site Proton donor is the histidine 188. 3-amino-2-oxopropyl phosphate is bound by residues glycine 189 and 210–211 (GH).

The protein belongs to the PNP synthase family. In terms of assembly, homooctamer; tetramer of dimers.

It localises to the cytoplasm. It catalyses the reaction 3-amino-2-oxopropyl phosphate + 1-deoxy-D-xylulose 5-phosphate = pyridoxine 5'-phosphate + phosphate + 2 H2O + H(+). The protein operates within cofactor biosynthesis; pyridoxine 5'-phosphate biosynthesis; pyridoxine 5'-phosphate from D-erythrose 4-phosphate: step 5/5. Catalyzes the complicated ring closure reaction between the two acyclic compounds 1-deoxy-D-xylulose-5-phosphate (DXP) and 3-amino-2-oxopropyl phosphate (1-amino-acetone-3-phosphate or AAP) to form pyridoxine 5'-phosphate (PNP) and inorganic phosphate. The polypeptide is Pyridoxine 5'-phosphate synthase (Wolbachia sp. subsp. Drosophila simulans (strain wRi)).